The following is a 61-amino-acid chain: Cytotoxin 1 (61 aa).

Disulfide bonds link cysteine 3/cysteine 22, cysteine 15/cysteine 39, cysteine 43/cysteine 54, and cysteine 55/cysteine 60.

This sequence belongs to the three-finger toxin family. Short-chain subfamily. Type IB cytotoxin sub-subfamily. In terms of tissue distribution, expressed by the venom gland.

The protein localises to the secreted. Functionally, this protein lyses red blood cells and has cardiotoxic and hypotensive activities. The polypeptide is Cytotoxin 1 (Hemachatus haemachatus (Rinkhals)).